The primary structure comprises 123 residues: MYGKIIFVLLLSEIVSISASSTTEVAMHTSTSSSVTKSYISSQTNDKHKGDTYPATLGAHEVSEISVTTVYPPEEDNGEWVQPVHPFSRPAPVVIILIILCVMAGVIGTILLISYGIRLLIKA.

The N-terminal stretch at 1–19 (MYGKIIFVLLLSEIVSISA) is a signal peptide. The chain crosses the membrane as a helical span at residues 93–113 (VVIILIILCVMAGVIGTILLI).

This sequence belongs to the glycophorin-A family. In terms of assembly, component of the ankyrin-1 complex in the erythrocyte, composed of ANK1, RHCE, RHAG, SLC4A1, EPB42, GYPA, GYPB and AQP1. Interacts (via the N-terminal) with RHAG; this interaction bridges the (RHAG)2(RHCE) heterotrimer with the SLC4A1 Band 3 I dimer complexed with GYPA. The N-terminal extracellular domain is heavily glycosylated on serine and threonine residues.

The protein resides in the cell membrane. Its function is as follows. Component of the ankyrin-1 complex, a multiprotein complex involved in the stability and shape of the erythrocyte membrane. The protein is Glycophorin-B of Pan troglodytes (Chimpanzee).